Reading from the N-terminus, the 410-residue chain is Adenosine receptor A2a (410 aa).

At 1 to 4 (MGSS) the chain is on the extracellular side. The helical transmembrane segment at 5–29 (VYITVELAIAVLAILGNVLVCWAVW) threads the bilayer. The Cytoplasmic segment spans residues 30–39 (INSNLQNVTN). Residues 40-63 (FFVVSLAAADIAVGVLAIPFAITI) form a helical membrane-spanning segment. At 64–74 (STGFCAACHGC) the chain is on the extracellular side. 3 disulfides stabilise this stretch: Cys68-Cys154, Cys71-Cys143, and Cys74-Cys161. The helical transmembrane segment at 75–97 (LFFACFVLVLTQSSIFSLLAIAI) threads the bilayer. The Cytoplasmic portion of the chain corresponds to 98 to 117 (DRYIAIRIPLRYNGLVTGVR). A helical membrane pass occupies residues 118–140 (AKGIIAICWVLSFAIGLTPMLGW). The Extracellular portion of the chain corresponds to 141–168 (NNCSQKDGNSTKTCGEGRVTCLFEDVVP). 2 N-linked (GlcNAc...) asparagine glycosylation sites follow: Asn142 and Asn149. An adenosine-binding site is contributed by Glu164. A helical membrane pass occupies residues 169 to 193 (MNYMVYYNFFAFVLLPLLLMLAIYL). The Cytoplasmic portion of the chain corresponds to 194 to 229 (RIFLAARRQLKQMESQPLPGERTRSTLQKEVHAAKS). The helical transmembrane segment at 230–253 (LAIIVGLFALCWLPLHIINCFTFF) threads the bilayer. Asn248 is a binding site for adenosine. Residues Cys254 and Cys257 are joined by a disulfide bond. Residues 254–261 (CSTCRHAP) lie on the Extracellular side of the membrane. A helical membrane pass occupies residues 262–285 (PWLMYLAIILSHSNSVVNPFIYAY). The adenosine site is built by Ser272 and His273. Residues 286–410 (RIREFRQTFR…SSWSSEFAPS (125 aa)) are Cytoplasmic-facing. The tract at residues 322 to 410 (HSTEGEQVSL…SSWSSEFAPS (89 aa)) is interaction with GAS2L2. A disordered region spans residues 344–410 (GSATHSGRRP…SSWSSEFAPS (67 aa)). The span at 371–388 (RDVELPTQERQEGQEHPG) shows a compositional bias: basic and acidic residues. The segment covering 401 to 410 (SSWSSEFAPS) has biased composition (polar residues).

Belongs to the G-protein coupled receptor 1 family. Interacts (via cytoplasmic C-terminal domain) with USP4; the interaction is direct. May interact with DRD4. Interacts with NECAB2. Interacts (via cytoplasmic C-terminal domain) with GAS2L2; interaction enhances receptor-mediated adenylyl cyclase activity. Post-translationally, ubiquitinated. Deubiquitinated by USP4; leading to stabilization and expression at the cell surface. As to expression, expressed in striatal neurons (at protein level).

Its subcellular location is the cell membrane. Receptor for adenosine. The activity of this receptor is mediated by G proteins which activate adenylyl cyclase. The polypeptide is Adenosine receptor A2a (Adora2a) (Rattus norvegicus (Rat)).